Reading from the N-terminus, the 24-residue chain is Skin secreted peptide 1 (24 aa).

As to expression, expressed by the skin glands.

It is found in the secreted. This Ascaphus truei (Coastal tailed frog) protein is Skin secreted peptide 1.